The chain runs to 392 residues: Monooxygenase AgnR1 (392 aa).

An N-terminal signal peptide occupies residues Met1–Ala20. Asn134 is a glycosylation site (N-linked (GlcNAc...) asparagine).

In terms of biological role, monooxygenase; part of the gene cluster that mediates the biosynthesis of agnestins, dihydroxy-xanthone metabolites. The pathway begins with the assembly and cyclization of atrochrysone thioester by the non-reducing polyketide synthase Agnpks1. The atrochrysone carboxyl ACP thioesterase AgnL7 then breaks the thioester bond and releases the atrochrysone carboxylic acid as the first enzyme-free intermediate. The decarboxylase AgnL1 then catalyzes the concerted decarboxylation-elimination required to convert atochrysone carboxylic acid into emodin anthrone, which is further oxidized to emodin by the anthrone oxygenase AgnL2. Emodin then undergoes reduction catalyzed by the oxidoreductase AgnL4 to yield the dihydroquinone tautomer which is the substrate for reduction by the short chain dehydrogenase AgnL6 reduction to produce hydroxyketone, followed by AgnL8 dehydration and likely spontaneous autoxidation to chrysophanol. Baeyer-Villiger oxidation by the oxidase AgnL3 leads to monodictyphenone via cleavage of the C-10/C-10a bond of chrysophanol. Alternative cleavage at the C-4a/C-10 bond of chrysophanol also leads to the formation some cephalone F. Further conversion to agnestins A and B, requires reduction to dihydro-monodictyphenone, oxidation to agnestin C probably via an epoxide, and rearrangement to either agnestin A or agnestin B directly, although agnestin A or agnestin B can also interconvert. Within the cluster, AgnR1 is the only unassigned oxidoreductase present which could be involved in this conversion. However, AgnR1 seems not to be involved in this step, and thus genes involved in the proposed oxidation/reduction may be located elsewhere on the genome. Further agnestin A derivatives are probably formed by spontaneous decarboxylations, dehydrations and methanolysis reactions. This is Monooxygenase AgnR1 from Paecilomyces divaricatus (Penicillium divaricatum).